The following is a 44-amino-acid chain: U4-ctenitoxin-Co1a (44 aa).

4 disulfide bridges follow: Cys-2–Cys-19, Cys-9–Cys-25, Cys-18–Cys-39, and Cys-27–Cys-37.

As to expression, expressed by the venom gland.

Its subcellular location is the secreted. Omega-agatoxins are antagonists of voltage-gated calcium channels (Cav). Toxic to mice by intracerebroventricular injection. The protein is U4-ctenitoxin-Co1a of Ctenus ornatus (Brazilian spider).